We begin with the raw amino-acid sequence, 343 residues long: MPQDVRFDLPFETPVSKHLESARARHLRWVWEMRLVHSREGFEEYRSWDLPQAAARTYPHASADDMVVLMNWFSLAFLFDDQFDASRPDRADRIAEVARELIVTPLRPAGTPPRVACPITLAWTEVWKHLSHGMSLTWQSRFAASWGRFLEAHCEEVDLAARGLEGTLGLVEFTEFRRRTVGIHHSIDAGERSRGFEVPAQAMAHPVMERMRDLAADTIGFMNDIHSFEREKRRGDGHNLIAVLRRERGCSWQEATDEAYRMTIARLDEYLELQERVPQMCDELRLDEAQRDGVRLGVEAIQHWINGNYEWALTSGRYAAAKEGAVATAELAGRGSVDDLLTV.

Mg(2+) contacts are provided by Asp-80 and Asp-84. Positions 80–84 (DDQFD) match the DDXXD motif motif. Substrate is bound at residue Arg-177. 2 residues coordinate Mg(2+): Asn-223 and Ser-227. Arg-230 lines the substrate pocket. Glu-231 is a binding site for Mg(2+). Position 317-318 (317-318 (RY)) interacts with substrate.

This sequence belongs to the terpene synthase family. Mg(2+) is required as a cofactor.

The catalysed reaction is (2E,6E)-farnesyl diphosphate + H2O = 7-epi-alpha-eudesmol + diphosphate. Its pathway is secondary metabolite biosynthesis; terpenoid biosynthesis. Catalyzes the conversion of (2E,6E)-farnesyl diphosphate (FPP) to yield the bicyclic sesquiterpenol 7-epi-alpha-eudesmol via a 1,10-cyclization, which requires the abstraction of the pyrophosphate from FPP to yield the (E,E)-germacradienyl cation. The only accepted substrate is (2E,6E)-farnesyl diphosphate (FPP). This is 7-epi-alpha-eudesmol synthase ((2E,6E)-farnesyl diphosphate cyclizing) from Streptomyces viridochromogenes (strain DSM 40736 / JCM 4977 / BCRC 1201 / Tue 494).